The following is a 553-amino-acid chain: Dihydroxy-acid dehydratase (553 aa).

C49 provides a ligand contact to [2Fe-2S] cluster. Position 81 (D81) interacts with Mg(2+). C122 provides a ligand contact to [2Fe-2S] cluster. Positions 123 and 124 each coordinate Mg(2+). At K124 the chain carries N6-carboxylysine. C194 provides a ligand contact to [2Fe-2S] cluster. E444 serves as a coordination point for Mg(2+). The active-site Proton acceptor is S470.

The protein belongs to the IlvD/Edd family. Homodimer. Requires [2Fe-2S] cluster as cofactor. Mg(2+) is required as a cofactor.

The enzyme catalyses (2R)-2,3-dihydroxy-3-methylbutanoate = 3-methyl-2-oxobutanoate + H2O. It catalyses the reaction (2R,3R)-2,3-dihydroxy-3-methylpentanoate = (S)-3-methyl-2-oxopentanoate + H2O. Its pathway is amino-acid biosynthesis; L-isoleucine biosynthesis; L-isoleucine from 2-oxobutanoate: step 3/4. It functions in the pathway amino-acid biosynthesis; L-valine biosynthesis; L-valine from pyruvate: step 3/4. Its function is as follows. Functions in the biosynthesis of branched-chain amino acids. Catalyzes the dehydration of (2R,3R)-2,3-dihydroxy-3-methylpentanoate (2,3-dihydroxy-3-methylvalerate) into 2-oxo-3-methylpentanoate (2-oxo-3-methylvalerate) and of (2R)-2,3-dihydroxy-3-methylbutanoate (2,3-dihydroxyisovalerate) into 2-oxo-3-methylbutanoate (2-oxoisovalerate), the penultimate precursor to L-isoleucine and L-valine, respectively. This chain is Dihydroxy-acid dehydratase, found in Aeropyrum pernix (strain ATCC 700893 / DSM 11879 / JCM 9820 / NBRC 100138 / K1).